The chain runs to 963 residues: Low-density lipoprotein receptor-related protein 8 (963 aa).

An N-terminal signal peptide occupies residues 1–32; that stretch reads MGLPEPGPLRLLALLLLLLLLLLLQLQHLAAA. Topologically, residues 42–826 are extracellular; sequence GPAKDCEKDQ…SKMGSTVTAA (785 aa). LDL-receptor class A domains follow at residues 46-82, 85-123, 126-164, 166-202, 205-246, 258-295, and 298-334; these read DCEKDQFQCRNERCIPSVWRCDEDDDCLDHSDEDDCP, TCADSDFTCDNGHCIHERWKCDGEEECPDGSDESEATCT, VCPAEKLSCGPTSHKCVPASWRCDGEKDCEGGADEAGCA, LCAPHEFQCGNRSCLAAVFVCDGDDDCGDGSDERGCA, ACGP…ELCG, ACATASQFACRSGECVHLGWRCDGDRDCKDKSDEADCP, and TCRGDEFQCGDGTCVLAIKHCNQEQDCPDGSDEAGCL. 27 disulfide bridges follow: cysteine 47–cysteine 59, cysteine 54–cysteine 72, cysteine 66–cysteine 81, cysteine 86–cysteine 98, cysteine 93–cysteine 111, cysteine 105–cysteine 122, cysteine 127–cysteine 141, cysteine 134–cysteine 154, cysteine 148–cysteine 163, cysteine 167–cysteine 179, cysteine 174–cysteine 192, cysteine 186–cysteine 201, cysteine 206–cysteine 221, cysteine 213–cysteine 234, cysteine 228–cysteine 245, cysteine 259–cysteine 272, cysteine 267–cysteine 285, cysteine 279–cysteine 294, cysteine 299–cysteine 311, cysteine 306–cysteine 324, cysteine 318–cysteine 333, cysteine 340–cysteine 351, cysteine 347–cysteine 360, cysteine 362–cysteine 374, cysteine 380–cysteine 390, cysteine 386–cysteine 399, and cysteine 401–cysteine 414. 6 residues coordinate Ca(2+): tryptophan 64, aspartate 67, aspartate 69, aspartate 71, aspartate 77, and glutamate 78. A glycan (N-linked (GlcNAc...) asparagine) is linked at asparagine 176. One can recognise an EGF-like 1 domain in the interval 336-375; the sequence is GLNECLHNNGGCSHICTDLKIGFECTCPAGFQLLDQKTCG. Positions 376 to 415 constitute an EGF-like 2; calcium-binding domain; that stretch reads DIDECKDPDACSQICVNYKGYFKCECYPGYEMDLLTKNCK. Asparagine 441 is a glycosylation site (N-linked (GlcNAc...) asparagine). 5 LDL-receptor class B repeats span residues 462-508, 509-551, 552-595, 596-639, and 640-681; these read NRIY…DWVH, KHIY…DPLR, GFMY…DLLS, QRLY…VFED, and KVFW…FHEL. N-linked (GlcNAc...) asparagine glycosylation is found at asparagine 518 and asparagine 538. Residues 740 to 798 are clustered O-linked oligosaccharides; sequence STSTTTLASTMTRTVPATTRAPGTTVHRSTYQNHSTETPSLTAAVPSSVSVPRAPSISP. A disordered region spans residues 754-815; the sequence is VPATTRAPGT…SNHSQHYANE (62 aa). The span at 765–777 shows a compositional bias: polar residues; sequence VHRSTYQNHSTET. N-linked (GlcNAc...) asparagine glycosylation is present at asparagine 772. A compositionally biased stretch (low complexity) spans 778–799; that stretch reads PSLTAAVPSSVSVPRAPSISPS. Residues 800 to 812 are compositionally biased toward polar residues; the sequence is TLSPATSNHSQHY. The N-linked (GlcNAc...) asparagine glycan is linked to asparagine 807. The helical transmembrane segment at 827 to 847 threads the bilayer; it reads VIGIIVPIVVIALLCMSGYLI. Residues 848–963 are Cytoplasmic-facing; it reads WRNWKRKNTK…ALSLEDDGLP (116 aa).

Belongs to the LDLR family. Homooligomer. Interacts with VLDLR. Reelin associates with two or more receptor molecules. Interacts with DAB1 and JNK-interacting proteins. Interacts with SNX17. Interacts with PCSK9. Interacts with MDK; this interaction is calcium dependent. Interacts with CLU. In terms of assembly, (Microbial infection) Interacts with Semliki Forest virus E2-E1 heterodimer; this interaction mediates viral entry to host cell. As to quaternary structure, (Microbial infection) Interacts (via class A repeats) with Eastern equine encephalitis virus spike glycoprotein E2; this interaction mediates viral entry into host cell. Post-translationally, O-glycosylated. Some alternatively spliced isoforms lack the O-linked sugar domain. Undergoes sequential, furin and gamma-secretase dependent, proteolytic processing, resulting in the extracellular release of the entire ligand-binding domain as a soluble polypeptide and in the intracellular domain (ICD) release into the cytoplasm. The gamma-secretase-dependent proteolytical processing occurs after the bulk of the extracellular domain has been shed, in a furin-dependent manner, in alternatively spliced isoforms carrying the furin cleavage site. Hypoglycosylation (mainly hypo-O-glycosylation) leads to increased extracellular cleavage, which in turn results in accelerating release of the intracellular domain (ICD) by the gamma-secretase. The resulting receptor fragment is able to inhibit Reelin signaling and in particular the Reelin-induced DAB1 phosphorylation. In terms of processing, tyrosine phosphorylated upon apoE binding. Post-translationally, ubiquitinated by MYLIP leading to degradation. As to expression, expressed mainly in brain and placenta. Also expressed in platelets and megakaryocytic cells. Not expressed in the liver.

It localises to the cell membrane. The protein resides in the secreted. Cell surface receptor for Reelin (RELN) and apolipoprotein E (apoE)-containing ligands. LRP8 participates in transmitting the extracellular Reelin signal to intracellular signaling processes, by binding to DAB1 on its cytoplasmic tail. Reelin acts via both the VLDL receptor (VLDLR) and LRP8 to regulate DAB1 tyrosine phosphorylation and microtubule function in neurons. LRP8 has higher affinity for Reelin than VLDLR. LRP8 is thus a key component of the Reelin pathway which governs neuronal layering of the forebrain during embryonic brain development. Binds the endoplasmic reticulum resident receptor-associated protein (RAP). Binds dimers of beta 2-glycoprotein I and may be involved in the suppression of platelet aggregation in the vasculature. Highly expressed in the initial segment of the epididymis, where it affects the functional expression of clusterin and phospholipid hydroperoxide glutathione peroxidase (PHGPx), two proteins required for sperm maturation. May also function as an endocytic receptor. Not required for endocytic uptake of SEPP1 in the kidney which is mediated by LRP2. Together with its ligand, apolipoprotein E (apoE), may indirectly play a role in the suppression of the innate immune response by controlling the survival of myeloid-derived suppressor cells. Functionally, (Microbial infection) Acts as a receptor for Semliki Forest virus. In Homo sapiens (Human), this protein is Low-density lipoprotein receptor-related protein 8 (LRP8).